The chain runs to 128 residues: uncharacterized protein (128 aa).

The next 2 helical transmembrane spans lie at 52–72 (LLVI…GIFL) and 91–111 (LFVA…VMLI).

It localises to the cell membrane. This is an uncharacterized protein from Mycoplasma pneumoniae (strain ATCC 29342 / M129 / Subtype 1) (Mycoplasmoides pneumoniae).